The primary structure comprises 95 residues: Glutamyl-tRNA(Gln) amidotransferase subunit C (95 aa).

Belongs to the GatC family. In terms of assembly, heterotrimer of A, B and C subunits.

It catalyses the reaction L-glutamyl-tRNA(Gln) + L-glutamine + ATP + H2O = L-glutaminyl-tRNA(Gln) + L-glutamate + ADP + phosphate + H(+). The enzyme catalyses L-aspartyl-tRNA(Asn) + L-glutamine + ATP + H2O = L-asparaginyl-tRNA(Asn) + L-glutamate + ADP + phosphate + 2 H(+). Its function is as follows. Allows the formation of correctly charged Asn-tRNA(Asn) or Gln-tRNA(Gln) through the transamidation of misacylated Asp-tRNA(Asn) or Glu-tRNA(Gln) in organisms which lack either or both of asparaginyl-tRNA or glutaminyl-tRNA synthetases. The reaction takes place in the presence of glutamine and ATP through an activated phospho-Asp-tRNA(Asn) or phospho-Glu-tRNA(Gln). The polypeptide is Glutamyl-tRNA(Gln) amidotransferase subunit C (Caulobacter vibrioides (strain ATCC 19089 / CIP 103742 / CB 15) (Caulobacter crescentus)).